We begin with the raw amino-acid sequence, 277 residues long: Probable enoyl-CoA hydratase, mitochondrial (277 aa).

The N-terminal 42 residues, 1 to 42 (MLKQVIKTVSSSQAPKKYFFKQFCTSTTEKKGRVGLVTLNRP), are a transit peptide targeting the mitochondrion. Substrate contacts are provided by residues 85 to 88 (ADIK) and glycine 128.

Belongs to the enoyl-CoA hydratase/isomerase family. Homohexamer; dimer of trimers.

It is found in the mitochondrion matrix. The enzyme catalyses a (3S)-3-hydroxyacyl-CoA = a (2E)-enoyl-CoA + H2O. The catalysed reaction is a 4-saturated-(3S)-3-hydroxyacyl-CoA = a (3E)-enoyl-CoA + H2O. It catalyses the reaction (3S)-3-hydroxybutanoyl-CoA = (2E)-butenoyl-CoA + H2O. It carries out the reaction 3-hydroxyisovaleryl-CoA = 3-methylbut-2-enoyl-CoA + H2O. The enzyme catalyses 3-hydroxypropanoyl-CoA = acryloyl-CoA + H2O. The catalysed reaction is 3-hydroxybutanoyl-CoA = (2E)-butenoyl-CoA + H2O. It functions in the pathway lipid metabolism; fatty acid beta-oxidation. Functionally, straight-chain enoyl-CoA thioesters from C4 up to at least C16 are processed, although with decreasing catalytic rate. The protein is Probable enoyl-CoA hydratase, mitochondrial (echs1) of Dictyostelium discoideum (Social amoeba).